The sequence spans 445 residues: tRNA modification GTPase MnmE (445 aa).

(6S)-5-formyl-5,6,7,8-tetrahydrofolate is bound by residues arginine 20, glutamate 79, and lysine 119. Residues 215–371 (GLKLAIIGPP…ILKNIENIAE (157 aa)) enclose the TrmE-type G domain. A K(+)-binding site is contributed by asparagine 225. GTP contacts are provided by residues 225–230 (NTGKSS), 244–250 (SNIAGTT), and 269–272 (DTAG). Serine 229 serves as a coordination point for Mg(2+). The K(+) site is built by serine 244, isoleucine 246, and threonine 249. Position 250 (threonine 250) interacts with Mg(2+). Residue lysine 445 participates in (6S)-5-formyl-5,6,7,8-tetrahydrofolate binding.

Belongs to the TRAFAC class TrmE-Era-EngA-EngB-Septin-like GTPase superfamily. TrmE GTPase family. In terms of assembly, homodimer. Heterotetramer of two MnmE and two MnmG subunits. K(+) is required as a cofactor.

It localises to the cytoplasm. Functionally, exhibits a very high intrinsic GTPase hydrolysis rate. Involved in the addition of a carboxymethylaminomethyl (cmnm) group at the wobble position (U34) of certain tRNAs, forming tRNA-cmnm(5)s(2)U34. This Rickettsia typhi (strain ATCC VR-144 / Wilmington) protein is tRNA modification GTPase MnmE.